Reading from the N-terminus, the 401-residue chain is MKEKIVLAYSGGLDTSVAVQWLIDKGYDVVACCLDVGEGKDLDIVYKKALDMRAVECHIIDATKEFSDEYVSYAIKGNLMYENAYPLVSALSRPLIAKKLVEIAEKTNSVGIAHGCTGKGNDQVRFEVAIKALNPSLKAFAPVREWAWSREEEIDYAIKHNIPVSINHDSPYSIDQNLWGRANECGILEDPYAAPPEDAFDLTNALEETPDTADEIILTFDKGIPVQIDGKTYELDDLILTLNALAGKHGIGRIDHVENRLVGIKSREIYEAPAAEVILKAHKALETITLTKDVAHFKPIIEKQFAEQLYNGLWFSPLTDSLKLFIDSTQQYVSGDVRIKLFKGNAIVNGRKSPYTLYDEKLATYTKEDAFNQDAAVGFIDIYGLPTQVNAMLHGGYSNEQ.

Position 8 to 16 (8 to 16 (AYSGGLDTS)) interacts with ATP. Tyr85 lines the L-citrulline pocket. Gly115 lines the ATP pocket. L-aspartate-binding residues include Thr117, Asn121, and Asp122. Residue Asn121 coordinates L-citrulline. Positions 125, 173, 258, and 270 each coordinate L-citrulline.

Belongs to the argininosuccinate synthase family. Type 1 subfamily. Homotetramer.

It localises to the cytoplasm. The enzyme catalyses L-citrulline + L-aspartate + ATP = 2-(N(omega)-L-arginino)succinate + AMP + diphosphate + H(+). Its pathway is amino-acid biosynthesis; L-arginine biosynthesis; L-arginine from L-ornithine and carbamoyl phosphate: step 2/3. The chain is Argininosuccinate synthase from Staphylococcus aureus (strain MRSA252).